A 298-amino-acid chain; its full sequence is Small ribosomal subunit protein uS3 (298 aa).

The KH type-2 domain maps to 39–107 (VREYLKAKLK…PVAVNIEEVR (69 aa)). The segment at 214–298 (PAAVEARTDE…PAAAADGKGE (85 aa)) is disordered. The span at 219-245 (ARTDEERRPRGPRRDDRGARPGADRPA) shows a compositional bias: basic and acidic residues. The span at 277–298 (KPAVQRVRKVAAPAAAADGKGE) shows a compositional bias: low complexity.

The protein belongs to the universal ribosomal protein uS3 family. In terms of assembly, part of the 30S ribosomal subunit. Forms a tight complex with proteins S10 and S14.

Binds the lower part of the 30S subunit head. Binds mRNA in the 70S ribosome, positioning it for translation. This chain is Small ribosomal subunit protein uS3, found in Albidiferax ferrireducens (strain ATCC BAA-621 / DSM 15236 / T118) (Rhodoferax ferrireducens).